A 202-amino-acid polypeptide reads, in one-letter code: Virulence protein F (202 aa).

Residues 1 to 15 (MRNSSLRDASGSNDA) show a composition bias toward polar residues. The segment at 1–21 (MRNSSLRDASGSNDAQVPHKT) is disordered. In terms of domain architecture, F-box spans 20-42 (KTELLNLPDHVLTEVAKRLATNN).

In terms of assembly, component of SCF(virF) E3 ubiquitin ligase complexes. Interacts with host VIP1 and SKP1A. Interacts with Arabidopsis thaliana ENAP1/VFP3 and VFP5 in the host cell nucleus.

It is found in the host nucleus. In the host plant, component of SCF(virF) E3 ubiquitin ligase complexes, which mediate the ubiquitination and subsequent proteasomal degradation of target proteins such as the host VIP1, after its implication in T-DNA translocation to the host nucleus. Required for the formation of tumors of a wild-type size on certain plant species only. The protein is Virulence protein F of Agrobacterium tumefaciens (strain 15955).